The following is a 135-amino-acid chain: Transcriptional activator protein (135 aa).

The Nuclear localization signal signature appears at 17–32; the sequence is KVTHRQVKKRAIRRRR. The segment at 37–54 is a zinc-finger region; the sequence is CGCSYYLHINCFNHGFTH. A compositionally biased stretch (polar residues) spans 77–88; the sequence is VFHNHQAPTTTI. The segment at 77–117 is disordered; it reads VFHNHQAPTTTIPAEPGHHNSPGSIQSQPEEGAGDSQMFSQ. Positions 120–135 are transactivation; that stretch reads DLDNLTASDWSFLKGL.

The protein belongs to the geminiviridae transcriptional activator protein family. Monomer. Homodimer. Homooligomer. Self-interaction correlates with nuclear localization and efficient activation of transcription. Monomers suppress local silencing by interacting with and inactivating host adenosine kinase 2 (ADK2) in the cytoplasm. Interacts with and inhibits host SNF1 kinase. Binds to ssDNA. Phosphorylated.

It localises to the host nucleus. It is found in the host cytoplasm. Functionally, strong activator of the late viral genes promoters. Enhances the expression of the capsid protein and nuclear shuttle protein. Acts as a suppressor of RNA-mediated gene silencing, also known as post-transcriptional gene silencing (PTGS), a mechanism of plant viral defense that limits the accumulation of viral RNAs. Suppresses the host RNA silencing by inhibiting adenosine kinase 2 (ADK2), a kinase involved in a general methylation pathway. Also suppresses the host basal defense by interacting with and inhibiting SNF1 kinase, a key regulator of cell metabolism implicated in innate antiviral defense. Determines pathogenicity. This is Transcriptional activator protein from Hewittia sublobata (Coralbush).